Consider the following 508-residue polypeptide: UDP-N-acetylmuramyl-tripeptide synthetase (508 aa).

Ser35 is a UDP-N-acetyl-alpha-D-muramoyl-L-alanyl-D-glutamate binding site. 118-124 (GTDGKSS) contributes to the ATP binding site. UDP-N-acetyl-alpha-D-muramoyl-L-alanyl-D-glutamate-binding positions include 163–164 (ST), Thr190, and Arg200. Lys232 bears the N6-carboxylysine mark.

This sequence belongs to the MurCDEF family. MurE subfamily. In terms of processing, carboxylation is probably crucial for Mg(2+) binding and, consequently, for the gamma-phosphate positioning of ATP.

It localises to the cytoplasm. The protein operates within cell wall biogenesis; peptidoglycan biosynthesis. Functionally, catalyzes the addition of an amino acid to the nucleotide precursor UDP-N-acetylmuramoyl-L-alanyl-D-glutamate (UMAG) in the biosynthesis of bacterial cell-wall peptidoglycan. The polypeptide is UDP-N-acetylmuramyl-tripeptide synthetase (Borrelia garinii subsp. bavariensis (strain ATCC BAA-2496 / DSM 23469 / PBi) (Borreliella bavariensis)).